The sequence spans 408 residues: MNYLYNISESLKKIFNYFSSITRDCEKKRVLIIGCGFGGSQVAKLLDSNFEVTVVERKQTFFNSIASIRAIVEPELAKKIYIPYDKLLKNGKFIYGTVIEISPTLVKLEDGKELTFDYLVIATGSNSLAPFKAPLEKISGTEIFNYYKDISEQIKQAKSILIVGGGSVGCEVVGEIINKYPIKNKELAKKITIVHSGNKLVSSKTNNKFNNLINESMKKRNVSVILNDRIEIPDDIKQCFINQTSPNFQVSLKTYKTKNGLSIESDFVIWTIGIKLNSESYKTNFSNEINEIGQIKVNQSCQVQGYDNIFAIGDITDFDELKTTYNALSHGNIVAKVIKDLSNGKNKNQLAKHKLLPPIISLSLGPKDGLTQINSNLNFGSFISRILKSNNLLINRFQTHFNNPEPLK.

Residues 34–38, R69, and D314 each bind FAD; that span reads GCGFG.

This sequence belongs to the FAD-dependent oxidoreductase family. The cofactor is FAD.

Functionally, putative FAD-dependent oxidoreductase. This chain is Apoptosis-inducing factor homolog A (aifA), found in Dictyostelium discoideum (Social amoeba).